A 205-amino-acid chain; its full sequence is Ribosomal RNA large subunit methyltransferase E (205 aa).

S-adenosyl-L-methionine-binding residues include Gly60, Trp62, Asp80, Asp96, and Asp121. Lys161 (proton acceptor) is an active-site residue.

This sequence belongs to the class I-like SAM-binding methyltransferase superfamily. RNA methyltransferase RlmE family.

The protein localises to the cytoplasm. It carries out the reaction uridine(2552) in 23S rRNA + S-adenosyl-L-methionine = 2'-O-methyluridine(2552) in 23S rRNA + S-adenosyl-L-homocysteine + H(+). Its function is as follows. Specifically methylates the uridine in position 2552 of 23S rRNA at the 2'-O position of the ribose in the fully assembled 50S ribosomal subunit. The protein is Ribosomal RNA large subunit methyltransferase E of Chromobacterium violaceum (strain ATCC 12472 / DSM 30191 / JCM 1249 / CCUG 213 / NBRC 12614 / NCIMB 9131 / NCTC 9757 / MK).